The primary structure comprises 355 residues: Elongation factor Ts (355 aa).

Residues 82–85 (TDFV) form an involved in Mg(2+) ion dislocation from EF-Tu region.

This sequence belongs to the EF-Ts family.

The protein resides in the cytoplasm. Associates with the EF-Tu.GDP complex and induces the exchange of GDP to GTP. It remains bound to the aminoacyl-tRNA.EF-Tu.GTP complex up to the GTP hydrolysis stage on the ribosome. The sequence is that of Elongation factor Ts from Helicobacter pylori (strain Shi470).